The primary structure comprises 747 residues: Pentatricopeptide repeat-containing protein At5g39710 (747 aa).

15 PPR repeats span residues 133–167, 168–203, 204–238, 239–273, 274–308, 309–343, 344–378, 379–413, 414–448, 449–483, 484–518, 519–553, 554–588, 604–638, and 639–673; these read TSSV…GFMP, GVLS…QVSP, NVFT…GCLP, NVVT…GLEP, NLIS…GYSL, DEVT…GLTP, SVIT…GLCP, NERT…GFSP, SVVT…GLSP, DVVS…GIKP, DTIT…GLPP, DEFT…GVLP, DVVT…ESVP, EFKS…NHKP, and DGTA…GFLL.

Belongs to the PPR family. P subfamily.

The protein is Pentatricopeptide repeat-containing protein At5g39710 (EMB2745) of Arabidopsis thaliana (Mouse-ear cress).